A 698-amino-acid polypeptide reads, in one-letter code: Colicin V secretion/processing ATP-binding protein CvaB (698 aa).

The Peptidase C39 domain occupies 26–145; the sequence is QTETAECGLA…RYFTGVALEV (120 aa). Residue cysteine 32 is part of the active site. 7 helical membrane passes run 33–53, 92–112, 176–196, 211–231, 289–311, 315–334, and 412–432; these read GLAC…LIYL, VLKT…LVSV, LAKI…MPVG, GLLT…AATS, TSVI…MLLY, LTWI…LVTY, and IVIL…IGMF. The ABC transmembrane type-1 domain maps to 176 to 458; that stretch reads LAKIFCLSVV…LTSFLLQLRI (283 aa). In terms of domain architecture, ABC transporter spans 492–698; it reads LETNGLSYRY…LRTVDRVISI (207 aa). 526 to 533 lines the ATP pocket; the sequence is GASGAGKT.

The protein belongs to the ABC transporter superfamily. Colicin V exporter (TC 3.A.1.110.2) family.

It is found in the cell membrane. Functionally, involved, in conjunction with CvaA, in the secretion of colicin V. This chain is Colicin V secretion/processing ATP-binding protein CvaB (cvaB), found in Escherichia coli.